The chain runs to 188 residues: HTH-type transcriptional repressor AcnR (188 aa).

Positions 10-70 constitute an HTH tetR-type domain; that stretch reads TNSRQEILEG…ALAREDAARM (61 aa). The H-T-H motif DNA-binding region spans 33–52; that stretch reads TVRRLEEATGKSRGAIFHHF. Residues 79-80, R130, and N134 contribute to the citrate site; that span reads LV. Residue E181 participates in Mg(2+) binding. Citrate is bound at residue R185.

Homodimer.

AcnR negatively controls the expression of the aconitase gene acn. Binds to the imperfect inverted repeat in the acn promoter region. In Corynebacterium glutamicum (strain ATCC 13032 / DSM 20300 / JCM 1318 / BCRC 11384 / CCUG 27702 / LMG 3730 / NBRC 12168 / NCIMB 10025 / NRRL B-2784 / 534), this protein is HTH-type transcriptional repressor AcnR.